Here is a 250-residue protein sequence, read N- to C-terminus: 5-oxoprolinase subunit A (250 aa).

This sequence belongs to the LamB/PxpA family. As to quaternary structure, forms a complex composed of PxpA, PxpB and PxpC.

The enzyme catalyses 5-oxo-L-proline + ATP + 2 H2O = L-glutamate + ADP + phosphate + H(+). Catalyzes the cleavage of 5-oxoproline to form L-glutamate coupled to the hydrolysis of ATP to ADP and inorganic phosphate. This is 5-oxoprolinase subunit A from Pseudomonas fluorescens (strain Pf0-1).